Consider the following 338-residue polypeptide: RAB6-interacting golgin (338 aa).

2 stretches are compositionally biased toward basic and acidic residues: residues 1–14 (MTEKFNGFSHDEIL) and 46–59 (RMPDKIFRQADQLR). Disordered regions lie at residues 1–109 (MTEK…LNLD) and 127–188 (ARDK…SPFK). 2 stretches are compositionally biased toward low complexity: residues 60–73 (KQQQQQPQQPIQKP) and 153–167 (SGGDSQTTSSTDDGS). Positions 192–244 (LKDFEQHRRMIEEQNKQKKQMLYQAIEQHTQKTAAESRKIEEIRHELSKLESD) form a coiled coil. Residues 244–260 (DLAVDVALLRKQIDNAC) are essential for Sas-6 binding. Residues 246-286 (AVDVALLRKQIDNACIHFANVEKQYVKIEAQFLRAKIELHN) form a necessary for localization to the centrosome region. Residues 246-323 (AVDVALLRKQ…TELMQKVGLS (78 aa)) form a necessary for localization to the Golgi region. The necessary for interaction with Sas-6 and essential for homodimerization stretch occupies residues 260-286 (CIHFANVEKQYVKIEAQFLRAKIELHN).

Belongs to the GORAB family. In terms of assembly, homodimer (via C-terminus); dimerization appears to be required for its trans-Golgi localization but not for its function and centriolar localization. Interacts (via C-terminus) with Rab6; binds Rab6 as a homodimer, this interaction seems to be required for trans-Golgi localization. Interacts (via C-terminus) with Sas-6; binds as a monomer to a Sas-6 homodimer.

Its subcellular location is the cytoplasm. The protein localises to the cytoskeleton. It is found in the microtubule organizing center. The protein resides in the centrosome. It localises to the centriole. Its subcellular location is the golgi apparatus. The protein localises to the trans-Golgi network. Required for centriole duplication likely through its interaction with Sas-6. During embryogenesis, maternally provided protein is required for centrosome duplication and nuclear division cycles of the syncytial embryos. In femoral chordotonal organs, required for sensory cilia structural integrity and functionality necessary for motor coordination. In male germline, has a role in cytokinesis which seems dependent on its localization to the Golgi. This is RAB6-interacting golgin from Drosophila melanogaster (Fruit fly).